The following is a 505-amino-acid chain: Cytochrome P450 76A2 (505 aa).

C448 is a heme binding site.

It belongs to the cytochrome P450 family. The cofactor is heme.

The sequence is that of Cytochrome P450 76A2 (CYP76A2) from Solanum melongena (Eggplant).